A 197-amino-acid polypeptide reads, in one-letter code: Peptide deformylase (197 aa).

2 residues coordinate Fe cation: C106 and H148. The active site involves E149. Fe cation is bound at residue H152.

The protein belongs to the polypeptide deformylase family. The cofactor is Fe(2+).

It catalyses the reaction N-terminal N-formyl-L-methionyl-[peptide] + H2O = N-terminal L-methionyl-[peptide] + formate. Removes the formyl group from the N-terminal Met of newly synthesized proteins. Requires at least a dipeptide for an efficient rate of reaction. N-terminal L-methionine is a prerequisite for activity but the enzyme has broad specificity at other positions. The polypeptide is Peptide deformylase (Mycolicibacterium smegmatis (strain ATCC 700084 / mc(2)155) (Mycobacterium smegmatis)).